The sequence spans 374 residues: Pectate lyase 1 (374 aa).

Residues 1–22 form the signal peptide; that stretch reads MKYLLPSAAAGLLLLAAQPTMA. Cys93 and Cys176 form a disulfide bridge. 4 residues coordinate Ca(2+): Asp150, Asp152, Glu187, and Asp191. Arg239 is an active-site residue. Cys350 and Cys373 form a disulfide bridge.

Belongs to the polysaccharide lyase 1 family. PLADES subfamily. Ca(2+) serves as cofactor.

It is found in the secreted. It catalyses the reaction Eliminative cleavage of (1-&gt;4)-alpha-D-galacturonan to give oligosaccharides with 4-deoxy-alpha-D-galact-4-enuronosyl groups at their non-reducing ends.. It functions in the pathway glycan metabolism; pectin degradation; 2-dehydro-3-deoxy-D-gluconate from pectin: step 2/5. Functionally, involved in maceration and soft-rotting of plant tissue. The chain is Pectate lyase 1 (pel1) from Pectobacterium carotovorum (Erwinia carotovora).